Reading from the N-terminus, the 171-residue chain is Interleukin-26 (171 aa).

The first 21 residues, 1-21 (MLVNFILRCGLLLVTLSLAIA), serve as a signal peptide directing secretion.

It belongs to the IL-10 family. Homodimer. Expressed in HVS transformed T-cells but not other T-cell lines or primary stimulated T-cells. Expressed in colonic T-cells including Th17 inflammatory T-cells; the expression is significantly increased in serum of patients with Crohn's disease (at protein level).

The protein localises to the secreted. May play a role in local mechanisms of mucosal immunity and seems to have a pro-inflammatory function. May play a role in inflammatory bowel disease. Activates STAT1 and STAT3, MAPK1/3 (ERK1/2), JUN and AKT. Induces expression of SOCS3, TNF-alpha and IL-8, secretion of IL-8 and IL-10 and surface expression of ICAM1. Decreases proliferation of intestinal epithelial cells. Is inhibited by heparin. This is Interleukin-26 (IL26) from Homo sapiens (Human).